A 382-amino-acid polypeptide reads, in one-letter code: tRNA-specific 2-thiouridylase MnmA (382 aa).

ATP-binding positions include 18–25 (AMSGGVDS) and leucine 44. Cysteine 112 serves as the catalytic Nucleophile. Cysteine 112 and cysteine 209 are oxidised to a cystine. Residue glycine 136 participates in ATP binding. The tract at residues 159-161 (RDQ) is interaction with tRNA. Cysteine 209 acts as the Cysteine persulfide intermediate in catalysis.

This sequence belongs to the MnmA/TRMU family.

It is found in the cytoplasm. The enzyme catalyses S-sulfanyl-L-cysteinyl-[protein] + uridine(34) in tRNA + AH2 + ATP = 2-thiouridine(34) in tRNA + L-cysteinyl-[protein] + A + AMP + diphosphate + H(+). Its function is as follows. Catalyzes the 2-thiolation of uridine at the wobble position (U34) of tRNA, leading to the formation of s(2)U34. In Methylobacterium sp. (strain 4-46), this protein is tRNA-specific 2-thiouridylase MnmA.